The primary structure comprises 142 residues: Galactose-6-phosphate isomerase subunit LacA 2 (142 aa).

It belongs to the LacAB/RpiB family. Heteromultimeric protein consisting of LacA and LacB.

The catalysed reaction is aldehydo-D-galactose 6-phosphate = keto-D-tagatose 6-phosphate. Its pathway is carbohydrate metabolism; D-galactose 6-phosphate degradation; D-tagatose 6-phosphate from D-galactose 6-phosphate: step 1/1. The chain is Galactose-6-phosphate isomerase subunit LacA 2 from Streptococcus pyogenes serotype M1.